Reading from the N-terminus, the 909-residue chain is Protein translocase subunit SecA (909 aa).

Residues Gln-87, 105-109 (GEGKT), and Asp-507 each bind ATP. The segment at 834–909 (EAVEEQRRRQ…KYKQCCGKLS (76 aa)) is disordered. Positions 837-848 (EEQRRRQGDMQY) are enriched in basic and acidic residues. Residues 859–871 (QGAGGEGAAGGTA) are compositionally biased toward gly residues. Residues Cys-893, Cys-895, Cys-904, and Cys-905 each contribute to the Zn(2+) site.

It belongs to the SecA family. As to quaternary structure, monomer and homodimer. Part of the essential Sec protein translocation apparatus which comprises SecA, SecYEG and auxiliary proteins SecDF-YajC and YidC. Zn(2+) is required as a cofactor.

The protein resides in the cell inner membrane. The protein localises to the cytoplasm. It catalyses the reaction ATP + H2O + cellular proteinSide 1 = ADP + phosphate + cellular proteinSide 2.. In terms of biological role, part of the Sec protein translocase complex. Interacts with the SecYEG preprotein conducting channel. Has a central role in coupling the hydrolysis of ATP to the transfer of proteins into and across the cell membrane, serving both as a receptor for the preprotein-SecB complex and as an ATP-driven molecular motor driving the stepwise translocation of polypeptide chains across the membrane. This chain is Protein translocase subunit SecA, found in Alkalilimnicola ehrlichii (strain ATCC BAA-1101 / DSM 17681 / MLHE-1).